The sequence spans 223 residues: 7-cyano-7-deazaguanine synthase (223 aa).

8–18 (MSGGMDSTLCA) contributes to the ATP binding site. Cysteine 187, cysteine 195, cysteine 198, and cysteine 201 together coordinate Zn(2+).

The protein belongs to the QueC family. Zn(2+) is required as a cofactor.

It catalyses the reaction 7-carboxy-7-deazaguanine + NH4(+) + ATP = 7-cyano-7-deazaguanine + ADP + phosphate + H2O + H(+). It functions in the pathway purine metabolism; 7-cyano-7-deazaguanine biosynthesis. Functionally, catalyzes the ATP-dependent conversion of 7-carboxy-7-deazaguanine (CDG) to 7-cyano-7-deazaguanine (preQ(0)). The chain is 7-cyano-7-deazaguanine synthase from Campylobacter curvus (strain 525.92).